A 361-amino-acid chain; its full sequence is Dihydroorotate dehydrogenase (quinone) (361 aa).

Residues 69 to 73 (AGFDK) and Thr-93 each bind FMN. Substrate is bound at residue Lys-73. 118–122 (NRLGF) contacts substrate. Residues Asn-147 and Asn-180 each contribute to the FMN site. Asn-180 lines the substrate pocket. The active-site Nucleophile is the Ser-183. Residue Asn-185 coordinates substrate. FMN-binding residues include Lys-221 and Thr-249. A substrate-binding site is contributed by 250-251 (NT). FMN is bound by residues Gly-271, Gly-300, and 321-322 (YT).

The protein belongs to the dihydroorotate dehydrogenase family. Type 2 subfamily. As to quaternary structure, monomer. Requires FMN as cofactor.

It is found in the cell membrane. The enzyme catalyses (S)-dihydroorotate + a quinone = orotate + a quinol. It participates in pyrimidine metabolism; UMP biosynthesis via de novo pathway; orotate from (S)-dihydroorotate (quinone route): step 1/1. Catalyzes the conversion of dihydroorotate to orotate with quinone as electron acceptor. This is Dihydroorotate dehydrogenase (quinone) from Roseiflexus sp. (strain RS-1).